We begin with the raw amino-acid sequence, 128 residues long: Fluoride-specific ion channel FluC (128 aa).

4 helical membrane passes run 7–27 (AVLL…LIAV), 34–54 (TGFP…IGMI), 70–90 (LLLA…MYEI), and 104–124 (LYLI…MALA). 2 residues coordinate Na(+): Gly-78 and Thr-81.

Belongs to the fluoride channel Fluc/FEX (TC 1.A.43) family.

Its subcellular location is the cell inner membrane. The enzyme catalyses fluoride(in) = fluoride(out). Na(+) is not transported, but it plays an essential structural role and its presence is essential for fluoride channel function. Fluoride-specific ion channel. Important for reducing fluoride concentration in the cell, thus reducing its toxicity. In Prosthecochloris aestuarii (strain DSM 271 / SK 413), this protein is Fluoride-specific ion channel FluC.